Here is a 584-residue protein sequence, read N- to C-terminus: Delta 8-(E)-sphingolipid desaturase (584 aa).

Residues 7-82 (KKIFTRSQII…FTRFKIGEIE (76 aa)) enclose the Cytochrome b5 heme-binding domain. 2 residues coordinate heme: H42 and H65. A disordered region spans residues 109 to 134 (NKNTSNKKTLDSKLDNDSSNSTSDLE). A helical membrane pass occupies residues 261–281 (LFLYSLSFLKINQLFLSAVFM). The Histidine box-1 signature appears at 293-297 (HDAGH). Residues 306 to 326 (IDNIFGMLIADWFGGLSLGWW) traverse the membrane as a helical segment. Positions 330 to 334 (HNVHH) match the Histidine box-2 motif. A run of 3 helical transmembrane segments spans residues 386–403 (YLYY…YRLS), 423–443 (YFEF…LVFK), and 455–475 (VMVS…SHFA). Positions 514-518 (QAIHH) match the Histidine box-3 motif.

The protein belongs to the fatty acid desaturase type 1 family.

The protein localises to the membrane. It carries out the reaction an N-acylsphing-4-enine + 2 Fe(II)-[cytochrome b5] + O2 + 2 H(+) = a (4E,8E)-4-sphinga-4,8-dienine ceramide + 2 Fe(III)-[cytochrome b5] + 2 H2O. It functions in the pathway lipid metabolism; sphingolipid metabolism. Functionally, delta(8)-fatty-acid desaturase which introduces a double bond at the 8-position in the long-chain base (LCB) of ceramides. Required for the formation of the di-unsaturated sphingoid base (E,E)-sphinga-4,8-dienine during glucosylceramide (GluCer) biosynthesis. The polypeptide is Delta 8-(E)-sphingolipid desaturase (Candida albicans (strain SC5314 / ATCC MYA-2876) (Yeast)).